A 95-amino-acid polypeptide reads, in one-letter code: Beta-defensin 132 (95 aa).

An N-terminal signal peptide occupies residues M1–G22. 3 cysteine pairs are disulfide-bonded: C27/C55, C35/C49, and C39/C56. Positions G72–P95 are disordered.

Belongs to the beta-defensin family.

It localises to the secreted. In terms of biological role, has antibacterial activity. This is Beta-defensin 132 (DEFB132) from Macaca fascicularis (Crab-eating macaque).